The primary structure comprises 340 residues: UDP-glucose 4-epimerase (340 aa).

NAD(+)-binding positions include 16–17 (YI), 37–42 (IDNNKN), 60–61 (DL), 82–86 (FAAKT), Ser-127, Tyr-154, Lys-158, and Phe-182. Substrate-binding residues include Ser-127 and Tyr-154. Tyr-154 functions as the Proton acceptor in the catalytic mechanism. Residues Asn-183, 199 to 200 (TL), 216 to 218 (FLY), Arg-231, and 295 to 298 (RSWD) each bind substrate.

This sequence belongs to the NAD(P)-dependent epimerase/dehydratase family. As to quaternary structure, homodimer. The cofactor is NAD(+).

The catalysed reaction is UDP-alpha-D-glucose = UDP-alpha-D-galactose. It participates in carbohydrate metabolism; galactose metabolism. In terms of biological role, involved in the metabolism of galactose. Catalyzes the conversion of UDP-galactose (UDP-Gal) to UDP-glucose (UDP-Glc) through a mechanism involving the transient reduction of NAD. This is UDP-glucose 4-epimerase (galE) from Mycoplasma genitalium (strain ATCC 33530 / DSM 19775 / NCTC 10195 / G37) (Mycoplasmoides genitalium).